Reading from the N-terminus, the 337-residue chain is Phenylalanine--tRNA ligase alpha subunit (337 aa).

Glu-258 is a binding site for Mg(2+).

The protein belongs to the class-II aminoacyl-tRNA synthetase family. Phe-tRNA synthetase alpha subunit type 1 subfamily. Tetramer of two alpha and two beta subunits. Requires Mg(2+) as cofactor.

The protein localises to the cytoplasm. It catalyses the reaction tRNA(Phe) + L-phenylalanine + ATP = L-phenylalanyl-tRNA(Phe) + AMP + diphosphate + H(+). The chain is Phenylalanine--tRNA ligase alpha subunit from Burkholderia thailandensis (strain ATCC 700388 / DSM 13276 / CCUG 48851 / CIP 106301 / E264).